We begin with the raw amino-acid sequence, 1918 residues long: NFX1-type zinc finger-containing protein 1 (1918 aa).

A compositionally biased stretch (basic and acidic residues) spans 1–12 (MEERRPHLDARP). 2 disordered regions span residues 1–58 (MEER…RANN) and 75–140 (RNPH…QPQQ). Positions 30-42 (RARNQANNPPANA) are enriched in low complexity. Positions 82–105 (RNQEGHASDEARDQRHDQENDTRW) are enriched in basic and acidic residues. Residues 120-129 (SNDNFQQWRT) show a composition bias toward polar residues. A coiled-coil region spans residues 286 to 313 (DIEEETEKNLEKVQTIIEHLQEKRREGT). Disordered stretches follow at residues 796 to 819 (SVSP…GEEE) and 876 to 896 (TAAG…QKKK). Residues 809-819 (EGDEEEEGEEE) are compositionally biased toward acidic residues. Polar residues predominate over residues 877–887 (AAGQEQATGEW). Residues 886–967 (EWQTQRNQKK…TSAERMAELR (82 aa)) adopt a coiled-coil conformation. 6 NF-X1-type zinc fingers span residues 1298-1320 (CGHV…QCMK), 1330-1346 (GHRC…PCQV), 1382-1400 (CGHR…LCSE), 1441-1463 (CGHP…RCQQ), 1471-1488 (CSHK…PCQR), and 1546-1564 (CGHP…KCRI). Positions 1741–1820 (LAKKRLSFTS…EKMEALKATL (80 aa)) form a coiled coil. An RZ-type zinc finger spans residues 1827–1898 (ISEEERVQIV…LASEMDGAQH (72 aa)). Zn(2+) contacts are provided by Cys1849, His1853, Cys1869, and Cys1872.

This sequence belongs to the ZNFX1 family. As to quaternary structure, interacts with MAVS. Widely expressed.

The protein resides in the mitochondrion outer membrane. It localises to the cytoplasm. It is found in the stress granule. In terms of biological role, RNA-binding protein that initiates the antiviral response and is required to restrict the replication of RNA viruses. Acts as a double-stranded RNA (dsRNA) sensor that recognizes viral RNA and then interacts with MAVS to initiate the type I interferon response. Also required for immunity against some bacteria, such as mycobacteria. This is NFX1-type zinc finger-containing protein 1 from Homo sapiens (Human).